We begin with the raw amino-acid sequence, 338 residues long: Anthranilate phosphoribosyltransferase (338 aa).

5-phospho-alpha-D-ribose 1-diphosphate contacts are provided by residues G78, 81 to 82 (GD), S86, 88 to 91 (NIST), 106 to 114 (KHGNRSITS), and S118. An anthranilate-binding site is contributed by G78. Mg(2+) is bound at residue S90. Residue N109 coordinates anthranilate. R163 is a binding site for anthranilate. Residues D222 and E223 each coordinate Mg(2+).

This sequence belongs to the anthranilate phosphoribosyltransferase family. Homodimer. Mg(2+) serves as cofactor.

It carries out the reaction N-(5-phospho-beta-D-ribosyl)anthranilate + diphosphate = 5-phospho-alpha-D-ribose 1-diphosphate + anthranilate. It functions in the pathway amino-acid biosynthesis; L-tryptophan biosynthesis; L-tryptophan from chorismate: step 2/5. Functionally, catalyzes the transfer of the phosphoribosyl group of 5-phosphorylribose-1-pyrophosphate (PRPP) to anthranilate to yield N-(5'-phosphoribosyl)-anthranilate (PRA). This chain is Anthranilate phosphoribosyltransferase, found in Staphylococcus haemolyticus (strain JCSC1435).